We begin with the raw amino-acid sequence, 898 residues long: Protein kintoun (898 aa).

Disordered regions lie at residues 558–680 (GELK…VESD) and 765–822 (ILGQ…SGIS). The segment covering 575 to 602 (INTRTVEDDTKVAKENVKKVDQETAHEG) has biased composition (basic and acidic residues). A compositionally biased stretch (basic residues) spans 603 to 616 (KKSKKNQRRKNKKR). Over residues 641–656 (NEANSFEGTGSSSEAT) the composition is skewed to polar residues.

The protein belongs to the PIH1 family. Kintoun subfamily.

The protein resides in the cytoplasm. In terms of biological role, required for cytoplasmic pre-assembly of axonemal dyneins, thereby playing a central role in motility in cilia and flagella. Involved in pre-assembly of dynein arm complexes in the cytoplasm before intraflagellar transport loads them for the ciliary compartment. The chain is Protein kintoun from Aedes aegypti (Yellowfever mosquito).